A 207-amino-acid chain; its full sequence is Large ribosomal subunit protein uL4 (207 aa).

The disordered stretch occupies residues 49–79; sequence HKVKSRGEVSGGGKKPWRQKGTGRARAGTSR.

It belongs to the universal ribosomal protein uL4 family. As to quaternary structure, part of the 50S ribosomal subunit.

One of the primary rRNA binding proteins, this protein initially binds near the 5'-end of the 23S rRNA. It is important during the early stages of 50S assembly. It makes multiple contacts with different domains of the 23S rRNA in the assembled 50S subunit and ribosome. Functionally, forms part of the polypeptide exit tunnel. The polypeptide is Large ribosomal subunit protein uL4 (Heliobacterium modesticaldum (strain ATCC 51547 / Ice1)).